Reading from the N-terminus, the 186-residue chain is UPF0397 protein lp_0150 (186 aa).

The next 5 helical transmembrane spans lie at 12 to 32 (VVAT…VAIP), 45 to 65 (GFLA…AVFI), 76 to 96 (GSPW…FGLA), 112 to 132 (LVWF…LLAP), and 151 to 171 (VITW…LLVL).

Belongs to the UPF0397 family.

The protein localises to the cell membrane. The polypeptide is UPF0397 protein lp_0150 (Lactiplantibacillus plantarum (strain ATCC BAA-793 / NCIMB 8826 / WCFS1) (Lactobacillus plantarum)).